The sequence spans 142 residues: Large ribosomal subunit protein uL11 (142 aa).

Belongs to the universal ribosomal protein uL11 family. Part of the ribosomal stalk of the 50S ribosomal subunit. Interacts with L10 and the large rRNA to form the base of the stalk. L10 forms an elongated spine to which L12 dimers bind in a sequential fashion forming a multimeric L10(L12)X complex. In terms of processing, one or more lysine residues are methylated.

Its function is as follows. Forms part of the ribosomal stalk which helps the ribosome interact with GTP-bound translation factors. The polypeptide is Large ribosomal subunit protein uL11 (Liberibacter asiaticus (Citrus greening disease)).